A 241-amino-acid chain; its full sequence is Large ribosomal subunit protein eL32 (241 aa).

Over residues 1-16 (MADNEEDVEAEEEYTE) the composition is skewed to acidic residues. Disordered stretches follow at residues 1–47 (MADN…GADQ) and 68–182 (VGGL…HPSG). Residues 29–44 (ESLREAGFESVEDVRG) show a composition bias toward basic and acidic residues. Acidic residues predominate over residues 73 to 96 (VESETEAEVEEEGGEEAPDEDVET). Positions 103–116 (LTEKTPDLSDEDAR) are enriched in basic and acidic residues. The span at 133–159 (DHHKKKRVSTSWRKPRGQLSKQRRGIK) shows a compositional bias: basic residues.

It belongs to the eukaryotic ribosomal protein eL32 family. In terms of assembly, part of the 50S ribosomal subunit. Interacts weakly with protein L15.

In terms of biological role, binds to the 23S rRNA. The chain is Large ribosomal subunit protein eL32 (rpl32e) from Haloarcula marismortui (strain ATCC 43049 / DSM 3752 / JCM 8966 / VKM B-1809) (Halobacterium marismortui).